Here is a 252-residue protein sequence, read N- to C-terminus: 2-succinyl-6-hydroxy-2,4-cyclohexadiene-1-carboxylate synthase (252 aa).

This sequence belongs to the AB hydrolase superfamily. MenH family. In terms of assembly, monomer.

The catalysed reaction is 5-enolpyruvoyl-6-hydroxy-2-succinyl-cyclohex-3-ene-1-carboxylate = (1R,6R)-6-hydroxy-2-succinyl-cyclohexa-2,4-diene-1-carboxylate + pyruvate. It functions in the pathway quinol/quinone metabolism; 1,4-dihydroxy-2-naphthoate biosynthesis; 1,4-dihydroxy-2-naphthoate from chorismate: step 3/7. The protein operates within quinol/quinone metabolism; menaquinone biosynthesis. In terms of biological role, catalyzes a proton abstraction reaction that results in 2,5-elimination of pyruvate from 2-succinyl-5-enolpyruvyl-6-hydroxy-3-cyclohexene-1-carboxylate (SEPHCHC) and the formation of 2-succinyl-6-hydroxy-2,4-cyclohexadiene-1-carboxylate (SHCHC). This is 2-succinyl-6-hydroxy-2,4-cyclohexadiene-1-carboxylate synthase from Salmonella typhimurium (strain LT2 / SGSC1412 / ATCC 700720).